A 414-amino-acid chain; its full sequence is Gamma-glutamyl phosphate reductase (414 aa).

Belongs to the gamma-glutamyl phosphate reductase family.

It is found in the cytoplasm. It catalyses the reaction L-glutamate 5-semialdehyde + phosphate + NADP(+) = L-glutamyl 5-phosphate + NADPH + H(+). The protein operates within amino-acid biosynthesis; L-proline biosynthesis; L-glutamate 5-semialdehyde from L-glutamate: step 2/2. In terms of biological role, catalyzes the NADPH-dependent reduction of L-glutamate 5-phosphate into L-glutamate 5-semialdehyde and phosphate. The product spontaneously undergoes cyclization to form 1-pyrroline-5-carboxylate. The polypeptide is Gamma-glutamyl phosphate reductase (Geobacillus kaustophilus (strain HTA426)).